The chain runs to 421 residues: Gamma-glutamyl phosphate reductase (421 aa).

It belongs to the gamma-glutamyl phosphate reductase family.

Its subcellular location is the cytoplasm. The enzyme catalyses L-glutamate 5-semialdehyde + phosphate + NADP(+) = L-glutamyl 5-phosphate + NADPH + H(+). It functions in the pathway amino-acid biosynthesis; L-proline biosynthesis; L-glutamate 5-semialdehyde from L-glutamate: step 2/2. In terms of biological role, catalyzes the NADPH-dependent reduction of L-glutamate 5-phosphate into L-glutamate 5-semialdehyde and phosphate. The product spontaneously undergoes cyclization to form 1-pyrroline-5-carboxylate. In Pseudomonas aeruginosa (strain UCBPP-PA14), this protein is Gamma-glutamyl phosphate reductase.